We begin with the raw amino-acid sequence, 591 residues long: MSEQSICQARAAVMVYDDANKKWVPAGGSTGFSRVHIYHHTGNNTFRVVGRKIQDHQVVINCAIPKGLKYNQATQTFHQWRDARQVYGLNFGSKEDANVFASAMMHALEVLNSQETGPTLPRQNSQLPAQVQNGPSQEELEIQRRQLQEQQRQKELERERLERERMERERLERERLERERLERERLEQEQLERERQERERQERLERQERLERQERLERQERLDRERQERQERERLERLERERQERERQEQLEREQLEWERERRISSAAAPASVETPLNSVLGDSSASEPGLQAASQPAETPSQQGIVLGPLAPPPPPPLPPGPAQASVALPPPPGPPPPPPLPSTGPPPPPPPPPLPNQVPPPPPPPPAPPLPASGFFLASMSEDNRPLTGLAAAIAGAKLRKVSRMEDTSFPSGGNAIGVNSASSKTDTGRGNGPLPLGGSGLMEEMSALLARRRRIAEKGSTIETEQKEDKGEDSEPVTSKASSTSTPEPTRKPWERTNTMNGSKSPVISRRDSPRKNQIVFDNRSYDSLHRPKSTPLSQPSANGVQTEGLDYDRLKQDILDEMRKELTKLKEELIDAIRQELSKSNTA.

The WH1 domain occupies 1 to 111 (MSEQSICQAR…SAMMHALEVL (111 aa)). A compositionally biased stretch (polar residues) spans 115-136 (ETGPTLPRQNSQLPAQVQNGPS). The disordered stretch occupies residues 115-146 (ETGPTLPRQNSQLPAQVQNGPSQEELEIQRRQ). A Phosphoserine modification is found at Ser125. A coiled-coil region spans residues 135-265 (PSQEELEIQR…LEWERERRIS (131 aa)). 9 repeat units span residues 156–160 (LERER), 161–165 (LERER), 166–170 (MERER), 171–175 (LERER), 176–180 (LERER), 181–185 (LERER), 186–190 (LEQEQ), 191–195 (LERER), and 196–200 (QERER). The tract at residues 156 to 200 (LERERLERERMERERLERERLERERLERERLEQEQLERERQERER) is 9 X 5 AA tandem repeats of [LMQ]-E-[QR]-E-[QR]. Positions 221–264 (RLDRERQERQERERLERLERERQERERQEQLEREQLEWERERRI) are enriched in basic and acidic residues. The segment at 221 to 379 (RLDRERQERQ…PPLPASGFFL (159 aa)) is disordered. Ser265 carries the phosphoserine; by PKA modification. A compositionally biased stretch (polar residues) spans 275-305 (TPLNSVLGDSSASEPGLQAASQPAETPSQQG). Composition is skewed to pro residues over residues 311–323 (LAPP…PPGP) and 330–373 (LPPP…PPLP). Positions 391–411 (GLAAAIAGAKLRKVSRMEDTS) are EVH2 block A. An EVH2 region spans residues 391–588 (GLAAAIAGAK…DAIRQELSKS (198 aa)). The short motif at 400–403 (KLRK) is the KLKR element. A disordered region spans residues 405–549 (SRMEDTSFPS…LSQPSANGVQ (145 aa)). Residues 432-443 (RGNGPLPLGGSG) are compositionally biased toward gly residues. Positions 442–459 (SGLMEEMSALLARRRRIA) are EVH2 block B. Ile465 is modified (phosphothreonine). Phosphoserine occurs at positions 471 and 475. Composition is skewed to polar residues over residues 479–491 (PVTS…STPE) and 499–509 (RTNTMNGSKSP). Residue Thr502 is modified to Phosphothreonine. Residues Ser506, Ser508, and Ser512 each carry the phosphoserine modification. Over residues 538-549 (TPLSQPSANGVQ) the composition is skewed to polar residues. The tract at residues 554 to 588 (DYDRLKQDILDEMRKELTKLKEELIDAIRQELSKS) is EVH2 block C. Positions 557-587 (RLKQDILDEMRKELTKLKEELIDAIRQELSK) form a coiled coil.

The protein belongs to the Ena/VASP family. As to quaternary structure, homotetramer. Interacts with APBB1IP, APBB1, PFN1 and ROBO4. Isoforms, containing the polyproline-rich regions with PPLP motifs, bind the WW domain of APBB1IP. Isoforms, containing the PPSY motif, bind, in vitro, to the WW2 and WW3 domains of NEDD4 and to the WW1 domain of YAP1. Binds the SH3 domain of BAIAP2-alpha but only after the autoinhibitory region of BAIAP2-alpha has been blocked by interaction with CDC42. Interacts, via the EVH1/WH1 domain, with the Pro-rich domains from VCL, ZYX and Listeria monocytogenes actA and with TES (via LIM domains). The TES LIM domain and the Pro-rich domains from VCL or ZYX compete for the same binding site. Interaction with ZYX is important for targeting ENAH to focal adhesions and enhances production of actin-rich structures at the apical surface of cells. Interacts, through the Pro-rich region, with the C-terminal SH3 domain of DNMPB. Binds GPHN. Interacts with FAT1 (via EVH1 domains). Heterotrimer with TES and ACTL7A. Interacts with PRPF40A. Post-translationally, NTN1-induced PKA phosphorylation on Ser-265 directly parallels the formation of filopodial protrusions. Expressed in myoepithelia of parotid, breast, bronchial glands and sweat glands. Expressed in colon-rectum muscolaris mucosae epithelium, pancreas acinar ductal epithelium, endometrium epithelium, prostate fibromuscolar stroma and placenta vascular media. Overexpressed in a majority of breast cancer cell lines and primary breast tumor lesions.

Its subcellular location is the cytoplasm. It localises to the cytoskeleton. It is found in the cell projection. The protein localises to the lamellipodium. The protein resides in the filopodium. Its subcellular location is the synapse. It localises to the cell junction. It is found in the focal adhesion. Its function is as follows. Ena/VASP proteins are actin-associated proteins involved in a range of processes dependent on cytoskeleton remodeling and cell polarity such as axon guidance and lamellipodial and filopodial dynamics in migrating cells. ENAH induces the formation of F-actin rich outgrowths in fibroblasts. Acts synergistically with BAIAP2-alpha and downstream of NTN1 to promote filipodia formation. The polypeptide is Protein enabled homolog (ENAH) (Homo sapiens (Human)).